Reading from the N-terminus, the 659-residue chain is MTTKIFKRIIVFAVIALSSGNILAQSSSITRKDFDHINLEYSGLEKVNKAVAAGNYDDAAKALLAYYREKSKAREPDFSNAEKPADIRQPIDKVTREMADKALVHQFQPHKGYGYFDYGKDINWQMWPVKDNEVRWQLHRVKWWQAMALVYHATGDEKYAREWVYQYSDWARKNPLGLSQDNDKFVWRPLEVSDRVQSLPPTFSLFVNSPAFTPAFLMEFLNSYHQQADYLSTHYAEQGNHRLFEAQRNLFAGVSFPEFKDSPRWRQTGISVLNTEIKKQVYADGMQFELSPIYHVAAIDIFLKAYGSAKRVNLEKEFPQSYVQTVENMIMALISISLPDYNTPMFGDSWITDKNFRMAQFASWARVFPANQAIKYFATDGKQGKAPNFLSKALSNAGFYTFRSGWDKNATVMVLKASPPGEFHAQPDNGTFELFIKGRNFTPDAGVFVYSGDEAIMKLRNWYRQTRIHSTLTLDNQNMVITKARQNKWETGNNLDVLTYTNPSYPNLDHQRSVLFINKKYFLVIDRAIGEATGNLGVHWQLKEDSNPVFDKTKNRVYTTYRDGNNLMIQSLNADRTSLNEEEGKVSYVYNKELKRPAFVFEKPKKNAGTQNFVSIVYPYDGQKAPEISIRENKGNDFEKGKLNLTLTINGKQQLVLVP.

A signal peptide spans 1 to 24 (MTTKIFKRIIVFAVIALSSGNILA). The active-site Proton acceptor is the Tyr294.

This sequence belongs to the polysaccharide lyase 12 family.

It localises to the periplasm. The catalysed reaction is Elimination of sulfate, appears to act on linkages between N-acetyl-D-glucosamine and uronate. Product is an unsaturated sugar.. Specifically cleaves heparan sulfate-rich regions of acidic polysaccharides. Does not act on N,O-desulfated glucosamine or N-acetyl-O-sulfated glucosamine linkages. Functions in cleaving metazoan heparan sulfate and providing carbon, nitrogen and sulfate sources for microorganisms. The polypeptide is Heparin-sulfate lyase (hepC) (Pedobacter heparinus (strain ATCC 13125 / DSM 2366 / CIP 104194 / JCM 7457 / NBRC 12017 / NCIMB 9290 / NRRL B-14731 / HIM 762-3)).